Consider the following 228-residue polypeptide: 2,3-bisphosphoglycerate-dependent phosphoglycerate mutase (228 aa).

Substrate-binding positions include 8–15, 21–22, arginine 60, 87–90, lysine 98, 114–115, and 183–184; these read RHGQSEWN, TG, ERHY, RR, and GN. Histidine 9 serves as the catalytic Tele-phosphohistidine intermediate. The active-site Proton donor/acceptor is the glutamate 87.

The protein belongs to the phosphoglycerate mutase family. BPG-dependent PGAM subfamily.

The enzyme catalyses (2R)-2-phosphoglycerate = (2R)-3-phosphoglycerate. Its pathway is carbohydrate degradation; glycolysis; pyruvate from D-glyceraldehyde 3-phosphate: step 3/5. Its function is as follows. Catalyzes the interconversion of 2-phosphoglycerate and 3-phosphoglycerate. This chain is 2,3-bisphosphoglycerate-dependent phosphoglycerate mutase, found in Staphylococcus aureus (strain Mu3 / ATCC 700698).